We begin with the raw amino-acid sequence, 235 residues long: Orotidine 5'-phosphate decarboxylase (235 aa).

Substrate contacts are provided by residues aspartate 17, lysine 39, 66–75 (DLKLHDIGNT), threonine 121, arginine 182, glutamine 191, glycine 211, and arginine 212. Lysine 68 (proton donor) is an active-site residue.

The protein belongs to the OMP decarboxylase family. Type 1 subfamily. In terms of assembly, homodimer.

The enzyme catalyses orotidine 5'-phosphate + H(+) = UMP + CO2. The protein operates within pyrimidine metabolism; UMP biosynthesis via de novo pathway; UMP from orotate: step 2/2. Its function is as follows. Catalyzes the decarboxylation of orotidine 5'-monophosphate (OMP) to uridine 5'-monophosphate (UMP). This Afipia carboxidovorans (strain ATCC 49405 / DSM 1227 / KCTC 32145 / OM5) (Oligotropha carboxidovorans) protein is Orotidine 5'-phosphate decarboxylase.